The chain runs to 253 residues: 3-deoxy-manno-octulosonate cytidylyltransferase (253 aa).

It belongs to the KdsB family.

Its subcellular location is the cytoplasm. It carries out the reaction 3-deoxy-alpha-D-manno-oct-2-ulosonate + CTP = CMP-3-deoxy-beta-D-manno-octulosonate + diphosphate. Its pathway is nucleotide-sugar biosynthesis; CMP-3-deoxy-D-manno-octulosonate biosynthesis; CMP-3-deoxy-D-manno-octulosonate from 3-deoxy-D-manno-octulosonate and CTP: step 1/1. It participates in bacterial outer membrane biogenesis; lipopolysaccharide biosynthesis. Activates KDO (a required 8-carbon sugar) for incorporation into bacterial lipopolysaccharide in Gram-negative bacteria. This Geotalea daltonii (strain DSM 22248 / JCM 15807 / FRC-32) (Geobacter daltonii) protein is 3-deoxy-manno-octulosonate cytidylyltransferase.